The chain runs to 189 residues: Keratin-associated protein 5-2 (189 aa).

8 tandem repeats follow at residues 21-24, 27-30, 33-36, 134-137, 144-147, 159-162, 169-172, and 179-182. The tract at residues 27–182 is 8 X 4 AA repeats of C-C-X-P; that stretch reads CCKPVCCCVP…CCCQSSCCAP (156 aa).

This sequence belongs to the KRTAP type 5 family. In terms of assembly, interacts with hair keratins.

Its function is as follows. In the hair cortex, hair keratin intermediate filaments are embedded in an interfilamentous matrix, consisting of hair keratin-associated protein (KRTAP), which are essential for the formation of a rigid and resistant hair shaft through their extensive disulfide bond cross-linking with abundant cysteine residues of hair keratins. The matrix proteins include the high-sulfur and high-glycine-tyrosine keratins. This is Keratin-associated protein 5-2 from Mus musculus (Mouse).